Reading from the N-terminus, the 380-residue chain is Alpha-N-acetylneuraminate alpha-2,8-sialyltransferase ST8SIA3 (380 aa).

The Cytoplasmic segment spans residues 1–17; the sequence is MRNCKMARVASVLGLVM. A helical; Signal-anchor for type II membrane protein membrane pass occupies residues 18–33; the sequence is LSVALLILSLISYVSL. Residues 34–380 lie on the Lumenal side of the membrane; the sequence is KKENIFTTPK…LTKLTLSHCA (347 aa). Asn93 and Asn113 each carry an N-linked (GlcNAc...) asparagine glycan. Intrachain disulfides connect Cys162–Cys313 and Cys176–Cys379. Residues Asn167 and Asn190 each contribute to the CMP-N-acetyl-beta-neuraminate site. Asn206 carries N-linked (GlcNAc...) asparagine glycosylation. CMP-N-acetyl-beta-neuraminate contacts are provided by Ser300, Thr301, Gly302, Trp322, Tyr336, and His337. Catalysis depends on His354, which acts as the Proton donor/acceptor.

This sequence belongs to the glycosyltransferase 29 family. Homodimer. As to expression, expressed in neurons in brain with higher expression in the striatum than in the hippocampus, cortex, and cerebellum (at protein level). Expressed in testes.

It localises to the golgi apparatus membrane. It catalyses the reaction a ganglioside GM3 (d18:1(4E)) + CMP-N-acetyl-beta-neuraminate = a ganglioside GD3 (d18:1(4E)) + CMP + H(+). The catalysed reaction is a ganglioside GM3 + CMP-N-acetyl-beta-neuraminate = a ganglioside GD3 + CMP + H(+). The enzyme catalyses an N-acetyl-alpha-neuraminyl-(2-&gt;3)-beta-D-galactosyl derivative + CMP-N-acetyl-beta-neuraminate = an N-acetyl-alpha-neuraminyl-(2-&gt;8)-N-acetyl-alpha-neuraminyl-(2-&gt;3)-beta-D-galactosyl derivative + CMP + H(+). It carries out the reaction an N-acetyl-alpha-neuraminyl-(2-&gt;3)-beta-D-galactosyl-(1-&gt;4)-N-acetyl-beta-D-glucosaminyl derivative + CMP-N-acetyl-beta-neuraminate = an alpha-Neu5Ac-(2-&gt;8)-alpha-Neu5Ac-(2-&gt;3)-beta-D-Gal-(1-&gt;4)-beta-D-GlcNAc derivative + CMP + H(+). It functions in the pathway protein modification; protein glycosylation. In terms of biological role, catalyzes the transfer of sialic acid from a CMP-linked sialic acid donor onto a terminal alpha-2,3-, alpha-2,6-, or alpha-2,8-linked sialic acid of an acceptor, such as N-linked oligosaccharides of glycoproteins and glycolipids through alpha-2,8-linkages. Forms oligosialic and polysialic acid on various sialylated N-acetyllactosamine oligosaccharides of glycoproteins, including FETUB N-glycans, a2-HS-glycoprotein (AHSG) and alpha 2,3-sialylated glycosphingolipids, such as alpha 2,3-sialylparagloboside and ganglioside GM3 and to a lesser extent NCAM1 N-glycans. However, it is much more specific to N-linked oligosaccharides of glycoproteins than glycosphingolipids. 2,3-sialylparagloboside served as the best acceptor substrate among the glycolipids. alpha-Neu5Ac-(2-&gt;8)-alpha-Neu5Ac-(2-&gt;3)-beta-D-Gal-(1-&gt;4)-6S-D-GlcNAc and monosialyl and disialyl N-acetyllactosamines are the best acceptor substrates among glycoproteins. May play critical role in the striatum by mediating the formation of disialylated and trisialylated terminal glycotopes on N- and O-glycans of specific striatal proteins, regulating their distribution in lipid rafts, affecting their interaction with other binding partners, and subsequently modulating striatal functions. The polypeptide is Alpha-N-acetylneuraminate alpha-2,8-sialyltransferase ST8SIA3 (Mus musculus (Mouse)).